Consider the following 638-residue polypeptide: Rik1-associated factor 1 (638 aa).

4 WD repeats span residues lysine 297 to phenylalanine 336, threonine 486 to serine 525, glutamate 544 to glutamine 583, and glutamate 587 to phenylalanine 626.

In terms of assembly, component of the Clr4 methyltransferase complex (ClrC) composed of at least clr4, rik1, pcu4, rbx1, raf1 and raf2. The cullin pcu4, rik1, raf1, raf2 and the ring-box protein rbx1 are components of an E3 ubiquitin ligase, whose activity is essential for heterochromatin assembly. Interacts with nup189.

The protein localises to the cytoplasm. Its subcellular location is the nucleus. It localises to the chromosome. In terms of biological role, component of the Clr4 methyltransferase complex (ClrC) which contributes to the establishment of heterochromatin by specifically methylating histone H3 to form H3K9me. ClrC preferentially ubiquitylates H3K14 and ClrC-mediated H3 ubiquitination promotes clr4 methyltransferase activity for the methylation of H3K9. H3K9me represents a specific tag for epigenetic transcriptional repression by recruiting swi6/HP1 to methylated histones which leads to transcriptional silencing within centromeric heterochromatin, telomeric regions and at the silent mating-type loci. Has a role in both mitotic and meiotic chromosome segregation. This chain is Rik1-associated factor 1 (raf1), found in Schizosaccharomyces pombe (strain 972 / ATCC 24843) (Fission yeast).